The primary structure comprises 50 residues: Alpha-conotoxin CnIG (50 aa).

A signal peptide spans 1–7; it reads LTTTVVS. The segment covering 1 to 13 has biased composition (polar residues); it reads LTTTVVSFPSDSA. A disordered region spans residues 1–26; that stretch reads LTTTVVSFPSDSASDGRDNEAKDERS. Residues 8–35 constitute a propeptide that is removed on maturation; that stretch reads FPSDSASDGRDNEAKDERSDMYELKRNG. Residues 14–26 show a composition bias toward basic and acidic residues; that stretch reads SDGRDNEAKDERS. Intrachain disulfides connect Cys37-Cys42 and Cys38-Cys48. Cys48 carries the post-translational modification Cysteine amide.

This sequence belongs to the conotoxin A superfamily. In terms of tissue distribution, expressed by the venom duct.

It is found in the secreted. This is Alpha-conotoxin CnIG from Conus consors (Singed cone).